We begin with the raw amino-acid sequence, 254 residues long: Probable triosephosphate isomerase 2 (254 aa).

9-11 is a binding site for substrate; the sequence is NMK. The Electrophile role is filled by histidine 96. The active-site Proton acceptor is the glutamate 168. 2 residues coordinate substrate: glycine 174 and serine 212.

The protein belongs to the triosephosphate isomerase family. Homodimer.

The protein resides in the cytoplasm. It catalyses the reaction D-glyceraldehyde 3-phosphate = dihydroxyacetone phosphate. It participates in carbohydrate biosynthesis; gluconeogenesis. Its pathway is carbohydrate degradation; glycolysis; D-glyceraldehyde 3-phosphate from glycerone phosphate: step 1/1. Functionally, involved in the gluconeogenesis. Catalyzes stereospecifically the conversion of dihydroxyacetone phosphate (DHAP) to D-glyceraldehyde-3-phosphate (G3P). The polypeptide is Probable triosephosphate isomerase 2 (Listeria monocytogenes serotype 4b (strain F2365)).